The primary structure comprises 332 residues: Ribosomal RNA small subunit methyltransferase H (332 aa).

Residues 38 to 40, Asp56, Phe83, Asp104, and Gln111 contribute to the S-adenosyl-L-methionine site; that span reads GGY. The segment at 309–332 is disordered; that stretch reads TETPFSEDISRPDTHIPRSRRQSA.

The protein belongs to the methyltransferase superfamily. RsmH family.

The protein localises to the cytoplasm. It carries out the reaction cytidine(1402) in 16S rRNA + S-adenosyl-L-methionine = N(4)-methylcytidine(1402) in 16S rRNA + S-adenosyl-L-homocysteine + H(+). Its function is as follows. Specifically methylates the N4 position of cytidine in position 1402 (C1402) of 16S rRNA. The polypeptide is Ribosomal RNA small subunit methyltransferase H (Zymomonas mobilis subsp. mobilis (strain ATCC 31821 / ZM4 / CP4)).